Reading from the N-terminus, the 191-residue chain is Thymidine kinase (191 aa).

ATP is bound by residues 9 to 16 and 85 to 88; these read GSMNSGKT and DESQ. The active-site Proton acceptor is Glu-86. 4 residues coordinate Zn(2+): Cys-143, Cys-146, Cys-181, and Cys-184.

The protein belongs to the thymidine kinase family. In terms of assembly, homotetramer.

It is found in the cytoplasm. The catalysed reaction is thymidine + ATP = dTMP + ADP + H(+). The sequence is that of Thymidine kinase from Listeria innocua serovar 6a (strain ATCC BAA-680 / CLIP 11262).